A 176-amino-acid chain; its full sequence is RING-H2 finger protein ATL73 (176 aa).

The signal sequence occupies residues Met-1–Ala-16. A helical transmembrane segment spans residues Val-42–Leu-62. The RING-type; atypical zinc-finger motif lies at Cys-113 to Arg-155.

The protein belongs to the RING-type zinc finger family. ATL subfamily.

The protein localises to the membrane. The enzyme catalyses S-ubiquitinyl-[E2 ubiquitin-conjugating enzyme]-L-cysteine + [acceptor protein]-L-lysine = [E2 ubiquitin-conjugating enzyme]-L-cysteine + N(6)-ubiquitinyl-[acceptor protein]-L-lysine.. It functions in the pathway protein modification; protein ubiquitination. This is RING-H2 finger protein ATL73 (ATL73) from Arabidopsis thaliana (Mouse-ear cress).